The sequence spans 1332 residues: DNA-directed RNA polymerase subunit beta' (1332 aa).

Cys-60, Cys-62, Cys-75, and Cys-78 together coordinate Zn(2+). The Mg(2+) site is built by Asp-535, Asp-537, and Asp-539. Cys-894, Cys-977, Cys-984, and Cys-987 together coordinate Zn(2+).

It belongs to the RNA polymerase beta' chain family. As to quaternary structure, the RNAP catalytic core consists of 2 alpha, 1 beta, 1 beta' and 1 omega subunit. When a sigma factor is associated with the core the holoenzyme is formed, which can initiate transcription. It depends on Mg(2+) as a cofactor. Zn(2+) serves as cofactor.

It catalyses the reaction RNA(n) + a ribonucleoside 5'-triphosphate = RNA(n+1) + diphosphate. DNA-dependent RNA polymerase catalyzes the transcription of DNA into RNA using the four ribonucleoside triphosphates as substrates. This is DNA-directed RNA polymerase subunit beta' from Corynebacterium kroppenstedtii (strain DSM 44385 / JCM 11950 / CIP 105744 / CCUG 35717).